The primary structure comprises 118 residues: Holo-[acyl-carrier-protein] synthase (118 aa).

Mg(2+) contacts are provided by Asp8 and Glu58.

The protein belongs to the P-Pant transferase superfamily. AcpS family. Requires Mg(2+) as cofactor.

The protein resides in the cytoplasm. The catalysed reaction is apo-[ACP] + CoA = holo-[ACP] + adenosine 3',5'-bisphosphate + H(+). Transfers the 4'-phosphopantetheine moiety from coenzyme A to a Ser of acyl-carrier-protein. The chain is Holo-[acyl-carrier-protein] synthase from Streptococcus pyogenes serotype M5 (strain Manfredo).